We begin with the raw amino-acid sequence, 128 residues long: RutC family protein BUsg_359 (128 aa).

This sequence belongs to the RutC family.

The chain is RutC family protein BUsg_359 from Buchnera aphidicola subsp. Schizaphis graminum (strain Sg).